Reading from the N-terminus, the 301-residue chain is Acetyl-coenzyme A carboxylase carboxyl transferase subunit beta (301 aa).

Positions 23-292 (VWTKCDSCGQ…PSPDEPRESV (270 aa)) constitute a CoA carboxyltransferase N-terminal domain. Residues Cys27, Cys30, Cys46, and Cys49 each contribute to the Zn(2+) site. The C4-type zinc-finger motif lies at 27–49 (CDSCGQVLYRAELERNLEVCPKC). The interval 280–301 (LPAPSPDEPRESVVVPDQEPEA) is disordered.

Belongs to the AccD/PCCB family. Acetyl-CoA carboxylase is a heterohexamer composed of biotin carboxyl carrier protein (AccB), biotin carboxylase (AccC) and two subunits each of ACCase subunit alpha (AccA) and ACCase subunit beta (AccD). The cofactor is Zn(2+).

Its subcellular location is the cytoplasm. The catalysed reaction is N(6)-carboxybiotinyl-L-lysyl-[protein] + acetyl-CoA = N(6)-biotinyl-L-lysyl-[protein] + malonyl-CoA. It functions in the pathway lipid metabolism; malonyl-CoA biosynthesis; malonyl-CoA from acetyl-CoA: step 1/1. Functionally, component of the acetyl coenzyme A carboxylase (ACC) complex. Biotin carboxylase (BC) catalyzes the carboxylation of biotin on its carrier protein (BCCP) and then the CO(2) group is transferred by the transcarboxylase to acetyl-CoA to form malonyl-CoA. The protein is Acetyl-coenzyme A carboxylase carboxyl transferase subunit beta of Enterobacter sp. (strain 638).